Consider the following 665-residue polypeptide: Macrolide export ATP-binding/permease protein MacB (665 aa).

Residues 17 to 255 (MQVKGLIREF…VAQFSSIIDK (239 aa)) enclose the ABC transporter domain. 53-60 (GQSGSGKS) is a binding site for ATP. The next 4 helical transmembrane spans lie at 287-307 (LLTM…VGLG), 544-564 (IAII…LVSV), 588-608 (FLIE…GMAF), and 630-650 (SIIA…FLPA).

Belongs to the ABC transporter superfamily. Macrolide exporter (TC 3.A.1.122) family. Homodimer. Part of the tripartite efflux system MacAB-TolC, which is composed of an inner membrane transporter, MacB, a periplasmic membrane fusion protein, MacA, and an outer membrane component, TolC. The complex forms a large protein conduit and can translocate molecules across both the inner and outer membranes. Interacts with MacA.

The protein localises to the cell inner membrane. Part of the tripartite efflux system MacAB-TolC. MacB is a non-canonical ABC transporter that contains transmembrane domains (TMD), which form a pore in the inner membrane, and an ATP-binding domain (NBD), which is responsible for energy generation. Confers resistance against macrolides. This chain is Macrolide export ATP-binding/permease protein MacB, found in Psychrobacter arcticus (strain DSM 17307 / VKM B-2377 / 273-4).